Consider the following 263-residue polypeptide: Acyl-[acyl-carrier-protein]--UDP-N-acetylglucosamine O-acyltransferase (263 aa).

The protein belongs to the transferase hexapeptide repeat family. LpxA subfamily. Homotrimer.

The protein resides in the cytoplasm. It catalyses the reaction a (3R)-hydroxyacyl-[ACP] + UDP-N-acetyl-alpha-D-glucosamine = a UDP-3-O-[(3R)-3-hydroxyacyl]-N-acetyl-alpha-D-glucosamine + holo-[ACP]. Its pathway is glycolipid biosynthesis; lipid IV(A) biosynthesis; lipid IV(A) from (3R)-3-hydroxytetradecanoyl-[acyl-carrier-protein] and UDP-N-acetyl-alpha-D-glucosamine: step 1/6. Its function is as follows. Involved in the biosynthesis of lipid A, a phosphorylated glycolipid that anchors the lipopolysaccharide to the outer membrane of the cell. This Xanthomonas oryzae pv. oryzae (strain PXO99A) protein is Acyl-[acyl-carrier-protein]--UDP-N-acetylglucosamine O-acyltransferase.